A 129-amino-acid polypeptide reads, in one-letter code: Small ribosomal subunit protein uS11 (129 aa).

Belongs to the universal ribosomal protein uS11 family. Part of the 30S ribosomal subunit. Interacts with proteins S7 and S18. Binds to IF-3.

Its function is as follows. Located on the platform of the 30S subunit, it bridges several disparate RNA helices of the 16S rRNA. Forms part of the Shine-Dalgarno cleft in the 70S ribosome. The chain is Small ribosomal subunit protein uS11 from Baumannia cicadellinicola subsp. Homalodisca coagulata.